The chain runs to 207 residues: Outer-membrane lipoprotein carrier protein (207 aa).

The signal sequence occupies residues 1-21 (MRLIRMLLLPVLAVTTLSAHA).

The protein belongs to the LolA family. In terms of assembly, monomer.

It is found in the periplasm. Functionally, participates in the translocation of lipoproteins from the inner membrane to the outer membrane. Only forms a complex with a lipoprotein if the residue after the N-terminal Cys is not an aspartate (The Asp acts as a targeting signal to indicate that the lipoprotein should stay in the inner membrane). This is Outer-membrane lipoprotein carrier protein from Pseudomonas fluorescens (strain ATCC BAA-477 / NRRL B-23932 / Pf-5).